Here is a 204-residue protein sequence, read N- to C-terminus: Urease accessory protein UreG (204 aa).

Position 12–19 (12–19 (GPVGSGKT)) interacts with GTP.

The protein belongs to the SIMIBI class G3E GTPase family. UreG subfamily. As to quaternary structure, homodimer. UreD, UreF and UreG form a complex that acts as a GTP-hydrolysis-dependent molecular chaperone, activating the urease apoprotein by helping to assemble the nickel containing metallocenter of UreC. The UreE protein probably delivers the nickel.

The protein localises to the cytoplasm. Facilitates the functional incorporation of the urease nickel metallocenter. This process requires GTP hydrolysis, probably effectuated by UreG. This chain is Urease accessory protein UreG, found in Pseudomonas fluorescens (strain ATCC BAA-477 / NRRL B-23932 / Pf-5).